A 184-amino-acid polypeptide reads, in one-letter code: UPF0398 protein BCAH820_1652 (184 aa).

It belongs to the UPF0398 family.

The polypeptide is UPF0398 protein BCAH820_1652 (Bacillus cereus (strain AH820)).